A 389-amino-acid chain; its full sequence is UDP-N-acetylglucosamine--N-acetylmuramyl-(pentapeptide) pyrophosphoryl-undecaprenol N-acetylglucosamine transferase (389 aa).

UDP-N-acetyl-alpha-D-glucosamine is bound by residues 39-41, N157, R193, S221, I275, 294-299, and Q320; these read TGG and ALTVSE.

It belongs to the glycosyltransferase 28 family. MurG subfamily.

It is found in the cell inner membrane. It carries out the reaction di-trans,octa-cis-undecaprenyl diphospho-N-acetyl-alpha-D-muramoyl-L-alanyl-D-glutamyl-meso-2,6-diaminopimeloyl-D-alanyl-D-alanine + UDP-N-acetyl-alpha-D-glucosamine = di-trans,octa-cis-undecaprenyl diphospho-[N-acetyl-alpha-D-glucosaminyl-(1-&gt;4)]-N-acetyl-alpha-D-muramoyl-L-alanyl-D-glutamyl-meso-2,6-diaminopimeloyl-D-alanyl-D-alanine + UDP + H(+). The protein operates within cell wall biogenesis; peptidoglycan biosynthesis. Functionally, cell wall formation. Catalyzes the transfer of a GlcNAc subunit on undecaprenyl-pyrophosphoryl-MurNAc-pentapeptide (lipid intermediate I) to form undecaprenyl-pyrophosphoryl-MurNAc-(pentapeptide)GlcNAc (lipid intermediate II). The chain is UDP-N-acetylglucosamine--N-acetylmuramyl-(pentapeptide) pyrophosphoryl-undecaprenol N-acetylglucosamine transferase from Saccharophagus degradans (strain 2-40 / ATCC 43961 / DSM 17024).